Reading from the N-terminus, the 458-residue chain is Peptidyl-prolyl cis-trans isomerase FKBP4 (458 aa).

N-acetylmethionine; in peptidyl-prolyl cis-trans isomerase FKBP4; alternate is present on M1. T2 is subject to N-acetylthreonine; in peptidyl-prolyl cis-trans isomerase FKBP4, N-terminally processed; partial. A PPIase FKBP-type 1 domain is found at G50–K138. Position 143 is a phosphothreonine; by CK2 (T143). The PPIase FKBP-type 2 domain maps to G167–E253. Y220 carries the post-translational modification Phosphotyrosine. The interaction with tubulin stretch occupies residues L267–T400. TPR repeat units lie at residues S270–E303, L319–N352, and E353–N386. K282 carries the post-translational modification N6-acetyllysine. Position 373 is an omega-N-methylarginine (R373). The segment at H423–A458 is disordered. A Phosphothreonine modification is found at T436. A Glycyl lysine isopeptide (Lys-Gly) (interchain with G-Cter in SUMO1) cross-link involves residue K441. A compositionally biased stretch (polar residues) spans V447–A458.

As to quaternary structure, homodimer. Interacts with GLMN. Associates with HSP90AA1 and HSP70 in steroid hormone receptor complexes. Also interacts with peroxisomal phytanoyl-CoA alpha-hydroxylase (PHYH). Interacts with NR3C1 and dynein. Interacts with HSF1 in the HSP90 complex. Associates with tubulin. Interacts with MAPT/TAU. Interacts (via TPR domain) with S100A1, S100A2 and S100A6; the interaction is Ca(2+) dependent. Interaction with S100A1 and S100A2 (but not with S100A6) leads to inhibition of FKBP4-HSP90 interaction. Interacts with dynein; causes partially NR3C1 transport to the nucleus. Post-translationally, phosphorylation by CK2 results in loss of HSP90 binding activity. As to expression, widely detected in the brain (at protein level).

The protein resides in the cytoplasm. Its subcellular location is the cytosol. The protein localises to the mitochondrion. It is found in the nucleus. It localises to the cytoskeleton. The protein resides in the cell projection. Its subcellular location is the axon. The enzyme catalyses [protein]-peptidylproline (omega=180) = [protein]-peptidylproline (omega=0). Inhibited by FK506. Immunophilin protein with PPIase and co-chaperone activities. Component of unligated steroid receptors heterocomplexes through interaction with heat-shock protein 90 (HSP90). Plays a role in the intracellular trafficking of heterooligomeric forms of steroid hormone receptors between cytoplasm and nuclear compartments. May have a protective role against oxidative stress in mitochondria. Also acts as a regulator of microtubule dynamics by inhibiting MAPT/TAU ability to promote microtubule assembly. The PPIase activity controls neuronal growth cones via regulation of TRPC1 channel opening. The chain is Peptidyl-prolyl cis-trans isomerase FKBP4 (Fkbp4) from Rattus norvegicus (Rat).